The sequence spans 263 residues: Palmitoyltransferase ZDHHC21 (263 aa).

Topologically, residues 1–4 are cytoplasmic; the sequence is MKMR. A helical membrane pass occupies residues 5 to 25; it reads LHFVVDPMGWFCMSMVFFVWI. The Extracellular portion of the chain corresponds to 26–44; that stretch reads YNSFLIPKLVLLPHYAEGH. A helical membrane pass occupies residues 45 to 65; the sequence is ITAEPVICYYLASLLCFSALF. The Cytoplasmic segment spans residues 66-131; that stretch reads RASTTDPGKL…WINNCVGEDN (66 aa). The 51-residue stretch at 90–140 folds into the DHHC domain; that stretch reads ELCNKCNMMRPKRSHHCSRCGHCVRRMDHHCPWINNCVGEDNHWLFLQLCF. The active-site S-palmitoyl cysteine intermediate is the cysteine 120. A helical transmembrane segment spans residues 132 to 152; the sequence is HWLFLQLCFYTQVLSFYTLVL. The Extracellular portion of the chain corresponds to 153–181; it reads DFCQYYYFLPLSSVDQADFAVHHELALLR. Residues 182 to 202 traverse the membrane as a helical segment; the sequence is VSCFMGLIMFGGISSLFYTQV. The Cytoplasmic segment spans residues 203–263; sequence KGILTDTTTI…KLNLTIRSHV (61 aa).

It belongs to the DHHC palmitoyltransferase family.

It localises to the golgi apparatus membrane. Its subcellular location is the golgi apparatus. The protein resides in the cis-Golgi network membrane. It is found in the cell membrane. The enzyme catalyses L-cysteinyl-[protein] + hexadecanoyl-CoA = S-hexadecanoyl-L-cysteinyl-[protein] + CoA. Its function is as follows. Palmitoyltransferase that catalyzes the addition of palmitate onto various protein substrates. The polypeptide is Palmitoyltransferase ZDHHC21 (Danio rerio (Zebrafish)).